We begin with the raw amino-acid sequence, 115 residues long: Large ribosomal subunit protein bL19 (115 aa).

Belongs to the bacterial ribosomal protein bL19 family.

In terms of biological role, this protein is located at the 30S-50S ribosomal subunit interface and may play a role in the structure and function of the aminoacyl-tRNA binding site. The polypeptide is Large ribosomal subunit protein bL19 (Yersinia pseudotuberculosis serotype O:1b (strain IP 31758)).